The chain runs to 215 residues: Cytochrome b6 (215 aa).

Residues Ile-32–Phe-52 form a helical membrane-spanning segment. A heme c-binding site is contributed by Cys-35. His-86 and His-100 together coordinate heme b. 3 helical membrane-spanning segments follow: residues Ala-90–Phe-110, Leu-116–Tyr-136, and Leu-186–Ile-206. His-187 and His-202 together coordinate heme b.

The protein belongs to the cytochrome b family. PetB subfamily. The 4 large subunits of the cytochrome b6-f complex are cytochrome b6, subunit IV (17 kDa polypeptide, PetD), cytochrome f and the Rieske protein, while the 4 small subunits are PetG, PetL, PetM and PetN. The complex functions as a dimer. Heme b is required as a cofactor. It depends on heme c as a cofactor.

The protein localises to the plastid. It localises to the chloroplast thylakoid membrane. Its function is as follows. Component of the cytochrome b6-f complex, which mediates electron transfer between photosystem II (PSII) and photosystem I (PSI), cyclic electron flow around PSI, and state transitions. In Nephroselmis olivacea (Green alga), this protein is Cytochrome b6.